We begin with the raw amino-acid sequence, 557 residues long: Resveratrol cleavage oxygenase 1 (557 aa).

Positions methionine 1 to serine 46 are disordered. The piceatannol site is built by tyrosine 144 and lysine 177. The trans-resveratrol site is built by tyrosine 144 and lysine 177. Fe cation is bound by residues histidine 211, histidine 262, and histidine 334. Glutamate 404 provides a ligand contact to piceatannol. Glutamate 404 lines the trans-resveratrol pocket. Fe cation is bound at residue histidine 523.

The protein belongs to the carotenoid oxygenase family. Requires Fe(2+) as cofactor.

It carries out the reaction trans-resveratrol + O2 = 3,5-dihydroxybenzaldehyde + 4-hydroxybenzaldehyde. The catalysed reaction is piceatannol + O2 = 3,5-dihydroxybenzaldehyde + 3,4-dihydroxybenzaldehyde. Its function is as follows. Dioxygenase that cleaves the interphenyl C-alpha-C-beta double bond of resveratrol to yield 3,5-dihydroxybenzaldehyde and 4-hydroxybenzaldehyde. Also cleaves piceatannol, a compound that differs from resveratrol only in the occurrence of an additional hydroxyl group, which leads to the production of 3,4-dihydroxybenzaldehyde and 3,5-hydroxybenzaldehyde. The polypeptide is Resveratrol cleavage oxygenase 1 (Botryotinia fuckeliana (strain B05.10) (Noble rot fungus)).